A 216-amino-acid polypeptide reads, in one-letter code: Imidazole glycerol phosphate synthase subunit HisH 1 (216 aa).

The region spanning 4 to 216 is the Glutamine amidotransferase type-1 domain; it reads CVLIVDAGLG…LQNFIALNPC (213 aa). Catalysis depends on cysteine 84, which acts as the Nucleophile. Active-site residues include histidine 195 and glutamate 197.

In terms of assembly, heterodimer of HisH and HisF.

Its subcellular location is the cytoplasm. It carries out the reaction 5-[(5-phospho-1-deoxy-D-ribulos-1-ylimino)methylamino]-1-(5-phospho-beta-D-ribosyl)imidazole-4-carboxamide + L-glutamine = D-erythro-1-(imidazol-4-yl)glycerol 3-phosphate + 5-amino-1-(5-phospho-beta-D-ribosyl)imidazole-4-carboxamide + L-glutamate + H(+). The enzyme catalyses L-glutamine + H2O = L-glutamate + NH4(+). The protein operates within amino-acid biosynthesis; L-histidine biosynthesis; L-histidine from 5-phospho-alpha-D-ribose 1-diphosphate: step 5/9. IGPS catalyzes the conversion of PRFAR and glutamine to IGP, AICAR and glutamate. The HisH subunit provides the glutamine amidotransferase activity that produces the ammonia necessary to HisF for the synthesis of IGP and AICAR. The protein is Imidazole glycerol phosphate synthase subunit HisH 1 (hisH1) of Prochlorococcus marinus (strain MIT 9313).